The primary structure comprises 227 residues: NADH-quinone oxidoreductase subunit C (227 aa).

It belongs to the complex I 30 kDa subunit family. As to quaternary structure, NDH-1 is composed of 14 different subunits. Subunits NuoB, C, D, E, F, and G constitute the peripheral sector of the complex.

It localises to the cell inner membrane. It carries out the reaction a quinone + NADH + 5 H(+)(in) = a quinol + NAD(+) + 4 H(+)(out). Functionally, NDH-1 shuttles electrons from NADH, via FMN and iron-sulfur (Fe-S) centers, to quinones in the respiratory chain. The immediate electron acceptor for the enzyme in this species is believed to be ubiquinone. Couples the redox reaction to proton translocation (for every two electrons transferred, four hydrogen ions are translocated across the cytoplasmic membrane), and thus conserves the redox energy in a proton gradient. The chain is NADH-quinone oxidoreductase subunit C from Legionella pneumophila (strain Paris).